The primary structure comprises 369 residues: MMDKDSFILPKDFPELRNDTFLRAARGEEIEHIPVWCMRQAGRYLPEFRESRAGKDFFETCRSPEACCELTLQPLRRFPFDAAIIFSDILVVPQAMGMEVQMCPGKGPTFPEPLKEPEDLQRLKTQVDVYSELDYVFKAITLTRHKIEGKVPLIGFTGAPWTLMSYMIEGGGSATHSKAKRWLYRYPEASHKLLSQLTDVIVEYLLGQVKAGAQALQVFESHTGCLGPVEFKEFSLPYLRDIARRVKDKIKESGLDNVPMIVFAKDGHYGLEDLSESAYEVVGLDWTIDPRSARVRTGGKVSLQGNMDPCALYGTKESISEIVRRMLEGFGTKGYIANLGHGLYPDMDPENVGAFVEAVHNHSRQLLKR.

8 residues coordinate coproporphyrinogen I: R39, A41, R43, R52, D88, Y166, S221, and H341. R39, A41, and R43 together coordinate coproporphyrinogen III. Residues D88, Y166, S221, and H341 each contribute to the coproporphyrinogen III site.

Belongs to the uroporphyrinogen decarboxylase family. In terms of assembly, homodimer.

It is found in the cytoplasm. Its subcellular location is the cytosol. The enzyme catalyses uroporphyrinogen III + 4 H(+) = coproporphyrinogen III + 4 CO2. The catalysed reaction is uroporphyrinogen I + 4 H(+) = coproporphyrinogen I + 4 CO2. It participates in porphyrin-containing compound metabolism; protoporphyrin-IX biosynthesis; coproporphyrinogen-III from 5-aminolevulinate: step 4/4. In terms of biological role, catalyzes the sequential decarboxylation of the four acetate side chains of uroporphyrinogen to form coproporphyrinogen and participates in the fifth step in the heme biosynthetic pathway. Isomer I or isomer III of uroporphyrinogen may serve as substrate, but only coproporphyrinogen III can ultimately be converted to heme. In vitro also decarboxylates pentacarboxylate porphyrinogen I. The sequence is that of Uroporphyrinogen decarboxylase from Danio rerio (Zebrafish).